Here is a 563-residue protein sequence, read N- to C-terminus: Putative inactive polypeptide N-acetylgalactosaminyltransferase 12 (563 aa).

Topologically, residues 1–6 are cytoplasmic; the sequence is MEVFAS. The chain crosses the membrane as a helical; Signal-anchor for type II membrane protein span at residues 7 to 29; it reads VLNCCFKYIVLPVWIFIVLLLLH. At 30-563 the chain is on the lumenal side; that stretch reads RDLSSWDGLM…SVMQSANILV (534 aa). The N-linked (GlcNAc...) asparagine glycan is linked to Asn50. A disulfide bond links Cys97 and Cys334. The interval 109–225 is catalytic subdomain A; the sequence is MKPASIIMIF…NGWLSPLLDT (117 aa). The catalytic subdomain B stretch occupies residues 280 to 342; that stretch reads PYEVAAVRTS…PCSRVGHLQP (63 aa). N-linked (GlcNAc...) asparagine glycans are attached at residues Asn389 and Asn428. The region spanning 433–549 is the Ricin B-type lectin domain; the sequence is ASGHVKTLEF…ANGKQRWILD (117 aa). Cysteines 446 and 461 form a disulfide. Asn464 and Asn469 each carry an N-linked (GlcNAc...) asparagine glycan. Disulfide bonds link Cys485–Cys499 and Cys523–Cys537. The N-linked (GlcNAc...) asparagine glycan is linked to Asn552.

The protein belongs to the glycosyltransferase 2 family. GalNAc-T subfamily.

Its subcellular location is the golgi apparatus membrane. Its function is as follows. Probable inactive glycosyltransferase. The chain is Putative inactive polypeptide N-acetylgalactosaminyltransferase 12 (pgant12) from Drosophila melanogaster (Fruit fly).